The primary structure comprises 364 residues: Spermidine/putrescine import ATP-binding protein PotA (364 aa).

In terms of domain architecture, ABC transporter spans 6 to 236 (IEIRQIYKSY…PANLHVAMFI (231 aa)). 38-45 (GPSGCGKT) is a binding site for ATP.

It belongs to the ABC transporter superfamily. Spermidine/putrescine importer (TC 3.A.1.11.1) family. As to quaternary structure, the complex is composed of two ATP-binding proteins (PotA), two transmembrane proteins (PotB and PotC) and a solute-binding protein (PotD).

The protein localises to the cell inner membrane. The catalysed reaction is ATP + H2O + polyamine-[polyamine-binding protein]Side 1 = ADP + phosphate + polyamineSide 2 + [polyamine-binding protein]Side 1.. Its function is as follows. Part of the ABC transporter complex PotABCD involved in spermidine/putrescine import. Responsible for energy coupling to the transport system. In Legionella pneumophila (strain Paris), this protein is Spermidine/putrescine import ATP-binding protein PotA.